Here is a 61-residue protein sequence, read N- to C-terminus: UPF0391 membrane protein Aave_0978 (61 aa).

2 helical membrane-spanning segments follow: residues alanine 5–alanine 25 and isoleucine 33–valine 53.

The protein belongs to the UPF0391 family.

Its subcellular location is the cell membrane. This Paracidovorax citrulli (strain AAC00-1) (Acidovorax citrulli) protein is UPF0391 membrane protein Aave_0978.